The primary structure comprises 331 residues: CRISPR-associated endonuclease Cas1 (331 aa).

E158, H223, and D238 together coordinate Mn(2+).

Belongs to the CRISPR-associated endonuclease Cas1 family. In terms of assembly, homodimer, forms a heterotetramer with a Cas2 homodimer. Requires Mg(2+) as cofactor. The cofactor is Mn(2+).

In terms of biological role, CRISPR (clustered regularly interspaced short palindromic repeat), is an adaptive immune system that provides protection against mobile genetic elements (viruses, transposable elements and conjugative plasmids). CRISPR clusters contain spacers, sequences complementary to antecedent mobile elements, and target invading nucleic acids. CRISPR clusters are transcribed and processed into CRISPR RNA (crRNA). Acts as a dsDNA endonuclease. Involved in the integration of spacer DNA into the CRISPR cassette. Plasmid targeted by CRISPR locus P1 transform wild-type cells very poorly. This is CRISPR-associated endonuclease Cas1 from Haloferax volcanii (strain ATCC 29605 / DSM 3757 / JCM 8879 / NBRC 14742 / NCIMB 2012 / VKM B-1768 / DS2) (Halobacterium volcanii).